The sequence spans 360 residues: Type II methyltransferase M2.ScrFI (360 aa).

The SAM-dependent MTase C5-type domain maps to 2–360; it reads LRVFEAFAGY…SLFKELFKSQ (359 aa). Cys127 is a catalytic residue.

This sequence belongs to the class I-like SAM-binding methyltransferase superfamily. C5-methyltransferase family.

The catalysed reaction is a 2'-deoxycytidine in DNA + S-adenosyl-L-methionine = a 5-methyl-2'-deoxycytidine in DNA + S-adenosyl-L-homocysteine + H(+). Functionally, a methylase, recognizes the double-stranded sequence 5'-CCNGG-3', methylates C-2 on both strands, and protects the DNA from cleavage by the ScrFI endonuclease. This Lactococcus lactis subsp. cremoris (Streptococcus cremoris) protein is Type II methyltransferase M2.ScrFI (scrFIBM).